The primary structure comprises 466 residues: Methylenetetrahydrofolate--tRNA-(uracil-5-)-methyltransferase TrmFO (466 aa).

Position 14 to 19 (14 to 19 (GGGLAG)) interacts with FAD.

The protein belongs to the MnmG family. TrmFO subfamily. It depends on FAD as a cofactor.

It localises to the cytoplasm. It carries out the reaction uridine(54) in tRNA + (6R)-5,10-methylene-5,6,7,8-tetrahydrofolate + NADH + H(+) = 5-methyluridine(54) in tRNA + (6S)-5,6,7,8-tetrahydrofolate + NAD(+). The catalysed reaction is uridine(54) in tRNA + (6R)-5,10-methylene-5,6,7,8-tetrahydrofolate + NADPH + H(+) = 5-methyluridine(54) in tRNA + (6S)-5,6,7,8-tetrahydrofolate + NADP(+). Functionally, catalyzes the folate-dependent formation of 5-methyl-uridine at position 54 (M-5-U54) in all tRNAs. The polypeptide is Methylenetetrahydrofolate--tRNA-(uracil-5-)-methyltransferase TrmFO (Brucella canis (strain ATCC 23365 / NCTC 10854 / RM-666)).